The following is a 99-amino-acid chain: Ribosomal processing cysteine protease Prp (99 aa).

H16 functions as the Proton donor in the catalytic mechanism. Residue C28 is the Nucleophile of the active site.

This sequence belongs to the Prp family. Homodimer.

Its function is as follows. An essential cysteine protease that cleaves the N-terminus from ribosomal protein bL27. The protein is Ribosomal processing cysteine protease Prp of Mycoplasma genitalium (strain ATCC 33530 / DSM 19775 / NCTC 10195 / G37) (Mycoplasmoides genitalium).